The following is a 348-amino-acid chain: SUMO-activating enzyme subunit 1 (348 aa).

It belongs to the ubiquitin-activating E1 family. As to quaternary structure, heterodimer of sae1 and uba2/sae2. The heterodimer corresponds to the two domains that are encoded on a single polypeptide chain in ubiquitin-activating enzyme E1. Interacts with ube2i.

It is found in the nucleus. Its pathway is protein modification; protein sumoylation. Its function is as follows. The heterodimer acts as an E1 ligase for sumo1, sumo2, and sumo3. It mediates ATP-dependent activation of sumo proteins followed by formation of a thioester bond between a sumo protein and a conserved active site cysteine residue on uba2/sae2. This Danio rerio (Zebrafish) protein is SUMO-activating enzyme subunit 1 (sae1).